A 408-amino-acid polypeptide reads, in one-letter code: Guanine nucleotide-binding protein alpha-14 subunit (408 aa).

Residues 39–46, 79–86, 201–205, 216–222, 241–245, 285–288, 325–328, and Ala-380 contribute to the GTP site; these read HSEELEAK, GGPLSGKS, TRIAD, VHSRKAT, DVGGQ, FPKF, and NKVD. A G-alpha domain is found at 71–408; it reads SHIKILILGG…KANAKATGLS (338 aa). The tract at residues 74-87 is G1 motif; that stretch reads KILILGGPLSGKST. A Mg(2+)-binding site is contributed by Ser-86. Positions 214–222 are G2 motif; it reads DIVHSRKAT. Thr-222 lines the Mg(2+) pocket. The segment at 237–246 is G3 motif; it reads LLMIDVGGQR. A G4 motif region spans residues 321–328; it reads LLFFNKVD. Residues 378 to 383 are G5 motif; it reads TTATNT.

Belongs to the G-alpha family. G proteins are composed of 3 units; alpha, beta and gamma. The alpha chain contains the guanine nucleotide binding site. Interacts with the dopamine receptor dop-2 (via C-terminus); the interaction is direct.

Functionally, guanine nucleotide-binding proteins (G proteins) are involved as modulators or transducers in various transmembrane signaling systems. In association with the G-protein coupled dopamine receptor dop-2, modulates two types of learning: touch habituation and chemosensory associative conditioning. The chain is Guanine nucleotide-binding protein alpha-14 subunit from Caenorhabditis elegans.